The sequence spans 399 residues: Cell division protein DivIB (399 aa).

2 disordered regions span residues 1–23 (MSKD…SEWQ) and 35–119 (EEEA…ATKE). Residues 1-133 (MSKDKKNEDK…AKIPGIHILR (133 aa)) are Cytoplasmic-facing. 2 stretches are compositionally biased toward basic and acidic residues: residues 35 to 65 (EEEA…KQDQ) and 75 to 119 (ESAK…ATKE). The chain crosses the membrane as a helical span at residues 134 to 154 (AFTILFPSLLLLFVSAYLLSP). Residues 155 to 399 (YATMKDIRVE…NQTTQRSSRR (245 aa)) are Extracellular-facing. The POTRA domain maps to 156-226 (ATMKDIRVEG…TKFTIKVKEY (71 aa)). The span at 364-388 (KAKQEAKEAEKKQEEEQKKQEEESN) shows a compositional bias: basic and acidic residues. The tract at residues 364–399 (KAKQEAKEAEKKQEEEQKKQEEESNRNQTTQRSSRR) is disordered. Residues 389 to 399 (RNQTTQRSSRR) are compositionally biased toward polar residues.

Belongs to the FtsQ/DivIB family. DivIB subfamily.

The protein localises to the cell membrane. Cell division protein that may be involved in stabilizing or promoting the assembly of the division complex. The chain is Cell division protein DivIB from Streptococcus pneumoniae serotype 4 (strain ATCC BAA-334 / TIGR4).